Reading from the N-terminus, the 122-residue chain is Large ribosomal subunit protein uL14 (122 aa).

This sequence belongs to the universal ribosomal protein uL14 family. As to quaternary structure, part of the 50S ribosomal subunit. Forms a cluster with proteins L3 and L19. In the 70S ribosome, L14 and L19 interact and together make contacts with the 16S rRNA in bridges B5 and B8.

In terms of biological role, binds to 23S rRNA. Forms part of two intersubunit bridges in the 70S ribosome. In Xylella fastidiosa (strain M23), this protein is Large ribosomal subunit protein uL14.